Here is an 81-residue protein sequence, read N- to C-terminus: Carboxysome shell vertex protein CsoS4B (81 aa).

The 77-residue stretch at 1-77 (MEVMRVRSDL…TDLTIGGIID (77 aa)) folds into the BMV domain.

This sequence belongs to the CcmL/EutN family. CsoS4 subfamily. In terms of assembly, homopentamer.

It is found in the carboxysome. In terms of biological role, probably forms vertices in the carboxysome. Has been modeled to induce curvature upon insertion into an otherwise flat hexagonal layer of major carboxysome subunits. A minor shell protein, only 12 pentamers of CsoS4A/CsoS4B are calculated to be present in each carboxysome. The 2 CsoS4 proteins contribute to the impermeability of the carboxysome to CO(2). Its central pore is probably too small to allow passage of metabolites; its function might be to anchor different proteins or metabolites to the carboxysome. Unlike beta-carboxysomes, alpha-carboxysomes (Cb) can form without cargo protein. CsoS2 is essential for Cb formation and is also capable of targeting foreign proteins to the Cb. The Cb shell assembles with the aid of CsoS2; CsoS1A, CsoS1B and CsoS1C form the majority of the shell while CsoS4A and CsoS4B form vertices. CsoS1D forms pseudohexamers that probably control metabolite flux into and out of the shell. This Halothiobacillus neapolitanus (strain ATCC 23641 / c2) (Thiobacillus neapolitanus) protein is Carboxysome shell vertex protein CsoS4B.